The chain runs to 423 residues: TNF receptor-associated factor family protein DDB_G0277243 (423 aa).

The RING-type; degenerate zinc finger occupies 20-66; that stretch reads CSICVDPVLNSLPLEQHQALSCKNGHLLCQACWGKQLALRKECCICK. 2 TRAF-type zinc fingers span residues 124–179 and 180–237; these read SHLR…NDMP and THIE…CYLS. Residues 287–411 enclose the MATH domain; the sequence is RYKGNWTIEN…DGKLTINIDV (125 aa).

The protein belongs to the TNF receptor-associated factor family. A subfamily.

The protein localises to the cytoplasm. Probable adapter protein and signal transducer that links members of the tumor necrosis factor receptor family to different signaling pathways by association with the receptor cytoplasmic domain and kinases. This is TNF receptor-associated factor family protein DDB_G0277243 from Dictyostelium discoideum (Social amoeba).